A 1126-amino-acid chain; its full sequence is [F-actin]-monooxygenase mical2 (1126 aa).

The interval 2 to 494 (GENGDDKHGR…KHLFITNELQ (493 aa)) is monooxygenase domain. FAD is bound by residues Cys-97, 116–118 (EKR), 123–125 (RNN), Phe-183, Tyr-299, and Asp-399. In terms of domain architecture, Calponin-homology (CH) spans 516 to 619 (DVRPNKLLIW…MVLYLSKFYE (104 aa)). Residues 659–680 (RKRVPKDEKTSDDSDLNKRRKT) carry the Nuclear localization signal motif. Disordered regions lie at residues 748–830 (AVTA…SLSS) and 892–935 (PSLG…SGMS). Pro residues predominate over residues 792-803 (VRPPVQPRPGPA). The segment covering 805 to 824 (PTRELRVVERAQSHPDDLGR) has biased composition (basic and acidic residues). The span at 918 to 932 (SSSDSSPSSAPSRKS) shows a compositional bias: low complexity. In terms of domain architecture, LIM zinc-binding spans 1001 to 1063 (DTCYFCKRRV…QPHFMHSVTK (63 aa)). Positions 1003, 1006, 1024, 1027, 1030, 1033, 1053, and 1056 each coordinate Zn(2+).

This sequence belongs to the Mical family. It depends on FAD as a cofactor.

It is found in the nucleus. The protein resides in the cytoplasm. The catalysed reaction is L-methionyl-[F-actin] + NADPH + O2 + H(+) = L-methionyl-(R)-S-oxide-[F-actin] + NADP(+) + H2O. Functionally, nuclear monooxygenase that promotes depolymerization of F-actin by mediating oxidation of specific methionine residues on actin and regulates the srf signaling. Acts by modifying nuclear actin subunits through the addition of oxygen to form methionine-sulfoxide, leading to promote actin filament severing and prevent repolymerization. Acts as a key regulator of the srf signaling pathway elicited by nerve growth factor and serum: mediates oxidation and subsequent depolymerization of nuclear actin, leading to increase mkl1/mrtf-a presence in the nucleus and promote srf:mkl1/mrtf-a-dependent gene transcription. The sequence is that of [F-actin]-monooxygenase mical2 from Xenopus tropicalis (Western clawed frog).